The primary structure comprises 423 residues: MEQTASPVVFAARDDASDVHFPHDDGSRVPYKVFSSRAVYDREQERIFRGPTWNFVALEAEIPNAGDFKSTFVGDTPVVVTRTEDGALSAWVNRCAHRGAQVCRKSRGNASSHTCVYHQWSFDNEGNLLGVPFRRGQKGMTGMPADFDPKQHGLRKLRVDSYRGLVFATFSDDVAPLPDYLGAQMRPWIDRIFHKPIEYLGCTRQYSKSNWKLYMENVKDPYHASMLHLFHTTFNIFRVGMKARSIPDANHGLHSIITVTKTGDDTSAAYKQQNIRSFDEGFHLEDESILDLVSEYDEDCTNHIQPIFPQLVIQQIHNTLVARQILPKGPDNFELIFHFFGYADDTPELRALRIKQANLVGPAGYISMEDTEATELVQRGTVRDADATSVIEMSRGNPEQQDTVITESLIRKFWVGYQKLMGY.

The Rieske domain maps to 53-168 (WNFVALEAEI…VDSYRGLVFA (116 aa)). Positions 95, 97, 115, and 118 each coordinate [2Fe-2S] cluster. Positions 223, 228, and 370 each coordinate Fe cation.

The protein belongs to the bacterial ring-hydroxylating dioxygenase alpha subunit family. As to quaternary structure, part of a multicomponent enzyme system composed of a reductase (AndAa), a ferredoxin (AndAb) and a two-subunit oxygenase component (AndAc and AndAd). Fe cation serves as cofactor. It depends on [2Fe-2S] cluster as a cofactor.

The enzyme catalyses anthranilate + NADH + O2 + 3 H(+) = catechol + NH4(+) + CO2 + NAD(+). It catalyses the reaction anthranilate + NADPH + O2 + 3 H(+) = catechol + NH4(+) + CO2 + NADP(+). The protein operates within aromatic compound metabolism; anthranilate degradation via hydroxylation; catechol from anthranilate: step 1/1. In terms of biological role, oxygenase component of anthranilate dioxygenase multicomponent enzyme system which catalyzes the incorporation of both atoms of molecular oxygen into anthranilate to form catechol. Can also act on benzoate and salicylate but not on 2-chlorobenzoate or o-toluate. This is Anthranilate 1,2-dioxygenase large subunit from Burkholderia cepacia (Pseudomonas cepacia).